The following is a 307-amino-acid chain: MIVIAGATATGKTELCIKLAKLLDGEVISADSMMVYKYMDIGTAKPSVEEREGIEHYVIDVVLPSQNYSVKDYIEDFDKAVQKIREKGKIPIVVGGTWLYIQGALYGLSDAPESDWTLREKLYSLVNLELYTQLQKVDPEYANKIHVNDKRRIVRALEVYYLTGKPFSFFINQHNFKSKRYNFLGFILERDRQELMDRIEIRVEKMFEKGLVEEVKKLVDMGFKDSLTSMQAIGYKEILPYLDKKISLEDAKKCIIENTKDFAKRQIRTFRNKTDFEKIEASKFEVNEMLDYIYRKYNQEVRDVSTR.

An ATP-binding site is contributed by 6 to 13; the sequence is GATATGKT. 8-13 is a binding site for substrate; sequence TATGKT. The tract at residues 31 to 34 is interaction with substrate tRNA; that stretch reads DSMM.

The protein belongs to the IPP transferase family. In terms of assembly, monomer. Mg(2+) is required as a cofactor.

The catalysed reaction is adenosine(37) in tRNA + dimethylallyl diphosphate = N(6)-dimethylallyladenosine(37) in tRNA + diphosphate. In terms of biological role, catalyzes the transfer of a dimethylallyl group onto the adenine at position 37 in tRNAs that read codons beginning with uridine, leading to the formation of N6-(dimethylallyl)adenosine (i(6)A). The chain is tRNA dimethylallyltransferase from Sulfurihydrogenibium sp. (strain YO3AOP1).